Here is a 951-residue protein sequence, read N- to C-terminus: Valine--tRNA ligase (951 aa).

A 'HIGH' region motif is present at residues 42 to 52 (PNVTGSLHMGH). Residues 554–558 (KMSKS) carry the 'KMSKS' region motif. Residue Lys-557 participates in ATP binding. The stretch at 880-914 (AGLIDKAAELDRLAKEVAKLEAEIGRIESKLSNEG) forms a coiled coil.

The protein belongs to the class-I aminoacyl-tRNA synthetase family. ValS type 1 subfamily. Monomer.

It is found in the cytoplasm. The enzyme catalyses tRNA(Val) + L-valine + ATP = L-valyl-tRNA(Val) + AMP + diphosphate. Functionally, catalyzes the attachment of valine to tRNA(Val). As ValRS can inadvertently accommodate and process structurally similar amino acids such as threonine, to avoid such errors, it has a 'posttransfer' editing activity that hydrolyzes mischarged Thr-tRNA(Val) in a tRNA-dependent manner. This is Valine--tRNA ligase from Pectobacterium atrosepticum (strain SCRI 1043 / ATCC BAA-672) (Erwinia carotovora subsp. atroseptica).